Consider the following 206-residue polypeptide: Guanylate kinase (206 aa).

One can recognise a Guanylate kinase-like domain in the interval 5-183 (GNLFVVAAPS…AVFDLKTIVH (179 aa)). 12–19 (APSGAGKS) is a binding site for ATP.

Belongs to the guanylate kinase family.

The protein resides in the cytoplasm. The enzyme catalyses GMP + ATP = GDP + ADP. In terms of biological role, essential for recycling GMP and indirectly, cGMP. The sequence is that of Guanylate kinase from Polaromonas sp. (strain JS666 / ATCC BAA-500).